Here is a 102-residue protein sequence, read N- to C-terminus: Small ribosomal subunit protein uS10 (102 aa).

Belongs to the universal ribosomal protein uS10 family. As to quaternary structure, part of the 30S ribosomal subunit.

In terms of biological role, involved in the binding of tRNA to the ribosomes. This chain is Small ribosomal subunit protein uS10, found in Lactiplantibacillus plantarum (strain ATCC BAA-793 / NCIMB 8826 / WCFS1) (Lactobacillus plantarum).